The chain runs to 552 residues: Arginine--tRNA ligase (552 aa).

Positions 123 to 133 (ANPTGPLTIGR) match the 'HIGH' region motif.

It belongs to the class-I aminoacyl-tRNA synthetase family. As to quaternary structure, monomer.

Its subcellular location is the cytoplasm. The enzyme catalyses tRNA(Arg) + L-arginine + ATP = L-arginyl-tRNA(Arg) + AMP + diphosphate. The chain is Arginine--tRNA ligase from Chlorobium phaeovibrioides (strain DSM 265 / 1930) (Prosthecochloris vibrioformis (strain DSM 265)).